Reading from the N-terminus, the 306-residue chain is MAVVTMRELLESGVHFGHQTRRWNPKMKRFIFTERNGIYIIDLLQSLSYIDRAYEFVKETVAHGGSIMFVGTKKQAQEAIAEQATRVGMPYVNQRWLGGMLTNFSTVYKRLQRLKELELIDFEDVAASGLTKKELLVLSREKAKLEKTLGGIREMQKVPSAVWIVDTKKEHIAVGEARKLHIPVVAILDTNCDPDEVDYKIPGNDDAIRSVTLLTRVIADAVAEGLIARSGAATGDSKPGEKAAGEPLAEWERDLLEGDKKDETAAAAEVQTSAETEKVADAEKPAEAVAEAEAEAPAADADAEQA.

A disordered region spans residues 257 to 306; sequence EGDKKDETAAAAEVQTSAETEKVADAEKPAEAVAEAEAEAPAADADAEQA. The segment covering 275–286 has biased composition (basic and acidic residues); it reads ETEKVADAEKPA. Low complexity predominate over residues 287 to 300; the sequence is EAVAEAEAEAPAAD.

Belongs to the universal ribosomal protein uS2 family.

This chain is Small ribosomal subunit protein uS2, found in Streptomyces griseus subsp. griseus (strain JCM 4626 / CBS 651.72 / NBRC 13350 / KCC S-0626 / ISP 5235).